The sequence spans 307 residues: Ribonuclease Z (307 aa).

Zn(2+) is bound by residues H62, H64, D66, H67, H139, D210, and H268. Catalysis depends on D66, which acts as the Proton acceptor.

The protein belongs to the RNase Z family. In terms of assembly, homodimer. Requires Zn(2+) as cofactor.

The enzyme catalyses Endonucleolytic cleavage of RNA, removing extra 3' nucleotides from tRNA precursor, generating 3' termini of tRNAs. A 3'-hydroxy group is left at the tRNA terminus and a 5'-phosphoryl group is left at the trailer molecule.. Zinc phosphodiesterase, which displays some tRNA 3'-processing endonuclease activity. Probably involved in tRNA maturation, by removing a 3'-trailer from precursor tRNA. This Myxococcus xanthus (strain DK1622) protein is Ribonuclease Z.